A 294-amino-acid chain; its full sequence is Hydroxyethylthiazole kinase (294 aa).

Residue M57 coordinates substrate. ATP contacts are provided by R132 and S196. Residue G223 participates in substrate binding.

This sequence belongs to the Thz kinase family. Mg(2+) serves as cofactor.

The catalysed reaction is 5-(2-hydroxyethyl)-4-methylthiazole + ATP = 4-methyl-5-(2-phosphooxyethyl)-thiazole + ADP + H(+). It functions in the pathway cofactor biosynthesis; thiamine diphosphate biosynthesis; 4-methyl-5-(2-phosphoethyl)-thiazole from 5-(2-hydroxyethyl)-4-methylthiazole: step 1/1. Catalyzes the phosphorylation of the hydroxyl group of 4-methyl-5-beta-hydroxyethylthiazole (THZ). This is Hydroxyethylthiazole kinase from Bifidobacterium adolescentis (strain ATCC 15703 / DSM 20083 / NCTC 11814 / E194a).